We begin with the raw amino-acid sequence, 125 residues long: Small ribosomal subunit protein uS12c (125 aa).

Positions 104-125 are disordered; sequence ASGVKDRKQGRSKYGGKRPKGD. Residues 113 to 125 show a composition bias toward basic residues; that stretch reads GRSKYGGKRPKGD.

Belongs to the universal ribosomal protein uS12 family. As to quaternary structure, part of the 30S ribosomal subunit.

It is found in the plastid. Its subcellular location is the chloroplast. With S4 and S5 plays an important role in translational accuracy. Located at the interface of the 30S and 50S subunits. In Emiliania huxleyi (Coccolithophore), this protein is Small ribosomal subunit protein uS12c (rps12).